Consider the following 585-residue polypeptide: Probable ubiquitin carboxyl-terminal hydrolase 9 (585 aa).

The tract at residues 1–23 (MSLLRWMGMNSPGSTDRRKSTWE) is disordered. The 384-residue stretch at 41 to 424 (YGLTNYGNTC…TAYVLFYTAA (384 aa)) folds into the USP domain. Cys-50 functions as the Nucleophile in the catalytic mechanism. The tract at residues 85–110 (CTKTNHPESSSSRHSKKKSMENRKSS) is disordered. His-375 functions as the Proton acceptor in the catalytic mechanism. Positions 447–470 (SQLKQESVEVSNLSSTPRSNSTIT) are enriched in polar residues. Residues 447–473 (SQLKQESVEVSNLSSTPRSNSTITYPD) are disordered. Ser-505 carries the post-translational modification Phosphoserine. Disordered regions lie at residues 511-530 (FHSRSVDASPKAVRRESRSF) and 540-585 (KFFG…RSKR). The segment covering 542 to 551 (FGSSQSNSPK) has biased composition (polar residues). Phosphoserine is present on Ser-549. The segment covering 553–570 (SPLRDTHKSSDEHSESKH) has biased composition (basic and acidic residues). The segment covering 574–585 (LPWQFSRSRSKR) has biased composition (polar residues).

This sequence belongs to the peptidase C19 family. In terms of assembly, interacts with bun107 and bun62.

It is found in the nucleus. It localises to the cytoplasm. The protein localises to the cell tip. The enzyme catalyses Thiol-dependent hydrolysis of ester, thioester, amide, peptide and isopeptide bonds formed by the C-terminal Gly of ubiquitin (a 76-residue protein attached to proteins as an intracellular targeting signal).. In terms of biological role, ubiquitin C-terminal hydrolase involved in regulating actin dynamics and/or endocytosis at cell tips and septa. The protein is Probable ubiquitin carboxyl-terminal hydrolase 9 (ubp9) of Schizosaccharomyces pombe (strain 972 / ATCC 24843) (Fission yeast).